The primary structure comprises 651 residues: Acetyl-coenzyme A synthetase (651 aa).

Residues 190 to 193 and Thr311 each bind CoA; that span reads RRGK. ATP is bound by residues 387–389, 411–416, Asp508, and Arg523; these read GEP and DTWWQT. Residue Ser531 participates in CoA binding. Arg534 contributes to the ATP binding site. 3 residues coordinate Mg(2+): Val545, His547, and Val550. Lys617 carries the post-translational modification N6-acetyllysine.

It belongs to the ATP-dependent AMP-binding enzyme family. Mg(2+) serves as cofactor. Post-translationally, acetylated. Deacetylation by the SIR2-homolog deacetylase activates the enzyme.

The enzyme catalyses acetate + ATP + CoA = acetyl-CoA + AMP + diphosphate. Catalyzes the conversion of acetate into acetyl-CoA (AcCoA), an essential intermediate at the junction of anabolic and catabolic pathways. AcsA undergoes a two-step reaction. In the first half reaction, AcsA combines acetate with ATP to form acetyl-adenylate (AcAMP) intermediate. In the second half reaction, it can then transfer the acetyl group from AcAMP to the sulfhydryl group of CoA, forming the product AcCoA. The polypeptide is Acetyl-coenzyme A synthetase (Mycobacterium bovis (strain ATCC BAA-935 / AF2122/97)).